A 765-amino-acid chain; its full sequence is ATP-dependent zinc metalloprotease FtsH (765 aa).

The Cytoplasmic portion of the chain corresponds to 1–27 (MSNTSNFNERVTENAKPPKNVKSIIWK). A helical membrane pass occupies residues 28–48 (TIGIIIVMAIIIGLILFYVLP). Topologically, residues 49 to 213 (RNTIANISNI…NVQLPNQSTA (165 aa)) are extracellular. Residues 214 to 234 (ILTQFLTSIIPFVILIVIYIV) form a helical membrane-spanning segment. The Cytoplasmic portion of the chain corresponds to 235–765 (IARRFSRTMG…EPTASTASSN (531 aa)). Position 314-321 (314-321 (GPPGTGKT)) interacts with ATP. Position 536 (histidine 536) interacts with Zn(2+). Glutamate 537 is a catalytic residue. Residues histidine 540 and aspartate 615 each coordinate Zn(2+). Basic and acidic residues predominate over residues 730-748 (KAAAEKEEQAEKAKLDHQS). Residues 730–765 (KAAAEKEEQAEKAKLDHQSDSAQPQEEPTASTASSN) are disordered. The segment covering 749–765 (DSAQPQEEPTASTASSN) has biased composition (polar residues).

The protein in the central section; belongs to the AAA ATPase family. In the C-terminal section; belongs to the peptidase M41 family. As to quaternary structure, homohexamer. The cofactor is Zn(2+).

It localises to the cell membrane. Its function is as follows. Acts as a processive, ATP-dependent zinc metallopeptidase for both cytoplasmic and membrane proteins. Plays a role in the quality control of integral membrane proteins. In Mycoplasmoides gallisepticum (strain R(high / passage 156)) (Mycoplasma gallisepticum), this protein is ATP-dependent zinc metalloprotease FtsH.